Here is a 246-residue protein sequence, read N- to C-terminus: Probable transcriptional regulatory protein Rmag_0394 (246 aa).

This sequence belongs to the TACO1 family.

Its subcellular location is the cytoplasm. The polypeptide is Probable transcriptional regulatory protein Rmag_0394 (Ruthia magnifica subsp. Calyptogena magnifica).